Reading from the N-terminus, the 315-residue chain is Olfactory receptor 8J3 (315 aa).

Over 1 to 25 (MAPENFTRVTEFILTGVSSCPELQI) the chain is Extracellular. The N-linked (GlcNAc...) asparagine glycan is linked to Asn-5. Residues 26–46 (PLFLVFLVLYVLTMAGNLGII) traverse the membrane as a helical segment. Residues 47–54 (TLTSVDSR) are Cytoplasmic-facing. Residues 55 to 75 (LQNPMYFFLRHLAIINLGNST) form a helical membrane-spanning segment. The Extracellular portion of the chain corresponds to 76–99 (VIAPKMLMNFLVKKKTTSFYECAT). A disulfide bridge connects residues Cys-97 and Cys-189. A helical membrane pass occupies residues 100 to 120 (QLGGFLFFIVSEVMMLAVMAY). Residues 121–139 (DRYVAICNPLLYMVVVSRR) lie on the Cytoplasmic side of the membrane. The helical transmembrane segment at 140–160 (LCLLLVSLTYLYGFSTAIVVS) threads the bilayer. The Extracellular segment spans residues 161–197 (PCIFSVSYCSSNIINHFYCDIAPLLALSCSDTYIPET). Residues 198-217 (IVFISAATNLVFSMITVLVS) traverse the membrane as a helical segment. Residues 218–237 (YFNIVLSILRIRSPEGRKKA) are Cytoplasmic-facing. A helical membrane pass occupies residues 238-258 (FSTCASHMIAVTVFYGTMLFM). Over 259–271 (YLQPQTNHSLDTD) the chain is Extracellular. Residue Asn-265 is glycosylated (N-linked (GlcNAc...) asparagine). A helical transmembrane segment spans residues 272-292 (KMASVFYTLVIPMLNPLIYSL). Over 293 to 315 (RNNDVNVALKKFMENPCYSFKSM) the chain is Cytoplasmic.

This sequence belongs to the G-protein coupled receptor 1 family.

It is found in the cell membrane. Its function is as follows. Odorant receptor. In Homo sapiens (Human), this protein is Olfactory receptor 8J3 (OR8J3).